A 215-amino-acid chain; its full sequence is Orotate phosphoribosyltransferase (215 aa).

Lysine 26 provides a ligand contact to 5-phospho-alpha-D-ribose 1-diphosphate. 34-35 (FF) is an orotate binding site. Residues 72-73 (YK), arginine 99, lysine 100, lysine 103, histidine 105, and 124-132 (DDVITAGTA) contribute to the 5-phospho-alpha-D-ribose 1-diphosphate site. Positions 128 and 156 each coordinate orotate.

It belongs to the purine/pyrimidine phosphoribosyltransferase family. PyrE subfamily. As to quaternary structure, homodimer. The cofactor is Mg(2+).

The catalysed reaction is orotidine 5'-phosphate + diphosphate = orotate + 5-phospho-alpha-D-ribose 1-diphosphate. Its pathway is pyrimidine metabolism; UMP biosynthesis via de novo pathway; UMP from orotate: step 1/2. In terms of biological role, catalyzes the transfer of a ribosyl phosphate group from 5-phosphoribose 1-diphosphate to orotate, leading to the formation of orotidine monophosphate (OMP). The polypeptide is Orotate phosphoribosyltransferase (Hahella chejuensis (strain KCTC 2396)).